A 63-amino-acid polypeptide reads, in one-letter code: Prokaryotic ubiquitin-like protein Pup (63 aa).

The segment covering 1-11 (MAQEQTRRGGG) has biased composition (basic and acidic residues). Residues 1-36 (MAQEQTRRGGGGDDDEFTSSTSVGQERREKLTEETD) are disordered. Residues 20–57 (STSVGQERREKLTEETDDLLDEIDDVLEENAEDFVRAY) form an ARC ATPase binding region. A coiled-coil region spans residues 23-51 (VGQERREKLTEETDDLLDEIDDVLEENAE). Deamidated glutamine is present on Gln-63. Gln-63 participates in a covalent cross-link: Isoglutamyl lysine isopeptide (Gln-Lys) (interchain with K-? in acceptor proteins).

This sequence belongs to the prokaryotic ubiquitin-like protein family. In terms of assembly, strongly interacts with the proteasome-associated ATPase ARC through a hydrophobic interface; the interacting region of Pup lies in its C-terminal half. There is one Pup binding site per ARC hexamer ring. Post-translationally, is modified by deamidation of its C-terminal glutamine to glutamate by the deamidase Dop, a prerequisite to the subsequent pupylation process.

It functions in the pathway protein degradation; proteasomal Pup-dependent pathway. Protein modifier that is covalently attached to lysine residues of substrate proteins, thereby targeting them for proteasomal degradation. The tagging system is termed pupylation. The sequence is that of Prokaryotic ubiquitin-like protein Pup from Mycobacterium leprae (strain Br4923).